Here is a 54-residue protein sequence, read N- to C-terminus: Large ribosomal subunit protein bL33A (54 aa).

The protein belongs to the bacterial ribosomal protein bL33 family.

In Saccharopolyspora erythraea (strain ATCC 11635 / DSM 40517 / JCM 4748 / NBRC 13426 / NCIMB 8594 / NRRL 2338), this protein is Large ribosomal subunit protein bL33A.